We begin with the raw amino-acid sequence, 426 residues long: Serine--tRNA ligase (426 aa).

Residue 233-235 (TAE) participates in L-serine binding. ATP is bound at residue 264 to 266 (RSE). E287 serves as a coordination point for L-serine. 351–354 (EISS) is an ATP binding site. S387 contacts L-serine.

Belongs to the class-II aminoacyl-tRNA synthetase family. Type-1 seryl-tRNA synthetase subfamily. In terms of assembly, homodimer. The tRNA molecule binds across the dimer.

Its subcellular location is the cytoplasm. The enzyme catalyses tRNA(Ser) + L-serine + ATP = L-seryl-tRNA(Ser) + AMP + diphosphate + H(+). It carries out the reaction tRNA(Sec) + L-serine + ATP = L-seryl-tRNA(Sec) + AMP + diphosphate + H(+). Its pathway is aminoacyl-tRNA biosynthesis; selenocysteinyl-tRNA(Sec) biosynthesis; L-seryl-tRNA(Sec) from L-serine and tRNA(Sec): step 1/1. Its function is as follows. Catalyzes the attachment of serine to tRNA(Ser). Is also able to aminoacylate tRNA(Sec) with serine, to form the misacylated tRNA L-seryl-tRNA(Sec), which will be further converted into selenocysteinyl-tRNA(Sec). In Pseudomonas savastanoi pv. phaseolicola (strain 1448A / Race 6) (Pseudomonas syringae pv. phaseolicola (strain 1448A / Race 6)), this protein is Serine--tRNA ligase.